We begin with the raw amino-acid sequence, 168 residues long: Pathogenesis-related protein 1C (168 aa).

The first 30 residues, M1–A30, serve as a signal peptide directing secretion. The SCP domain maps to L38–Y156.

The protein belongs to the CRISP family. Three disulfide bonds are present.

It is found in the vacuole. In terms of biological role, probably involved in the defense reaction of plants against pathogens. The sequence is that of Pathogenesis-related protein 1C from Nicotiana tabacum (Common tobacco).